The following is a 501-amino-acid chain: uncharacterized protein (501 aa).

The protein belongs to the UbiD family.

This is an uncharacterized protein from Synechocystis sp. (strain ATCC 27184 / PCC 6803 / Kazusa).